Consider the following 413-residue polypeptide: Hemolin (413 aa).

Positions M1–A18 are cleaved as a signal peptide. Ig-like C2-type domains follow at residues P25–S112, P122–R211, P233–T322, and P327–N413. 4 disulfides stabilise this stretch: C46/C97, C140/C199, C252/C305, and C349/C395. The N-linked (GlcNAc...) asparagine glycan is linked to N283.

The protein belongs to the hemolin family. In terms of tissue distribution, expressed in larval bristles.

It is found in the secreted. Its activity is regulated as follows. Increased activity in presence of phospholipids (low concentrations) and calcium ions. Inhibited by PMSF. Not affected by EDTA and E-64. Bristle toxin involved in caterpillar defense by participating in hemorrhagic syndrome characterized by a consumptive coagulopathy. Exhibits procoagulant activity through selective factor X proteolytic activation. Activates factor X in a dose- and time-dependent manner but does not activate gamma-carboxyglutamic acid domainless factor X. Its activity does not depend on calcium ions. Also functions as a growth stimulator and an inhibitor of cellular death for endothelial cells. In vitro, increases proliferation of human umbilical vein endothelial cells (HUVEC) and inhibits the apoptosis induced by starvation. Also increases slightly the complement decay-accelerating factor (CD55), which protects cells from complement-mediated lysis. On the other hand, does not alter the release or expression of von Willebrand factor (VWF), tissue factor (F3), intercellular adhesion molecule-1 (ICAM1), interleukin-8 (CXCL8), and prostacyclin. Does not show fibrinolytic or fibrinogenolytic activities. The protein is Hemolin of Lonomia obliqua (Moth).